Reading from the N-terminus, the 488-residue chain is Rhamnulokinase (488 aa).

13-17 (ASSGR) serves as a coordination point for ATP. An intrachain disulfide couples Cys68 to Cys222. Substrate is bound by residues Gly83 and 236 to 238 (HDT). Residue Asp237 is the Proton acceptor of the active site. Thr259 lines the ATP pocket. Asn296 contacts substrate. Gln304 contacts ATP. Cysteines 353 and 370 form a disulfide. Residue Gly402 participates in ATP binding. Cys413 and Cys417 form a disulfide bridge.

It belongs to the rhamnulokinase family. It depends on Mg(2+) as a cofactor.

The catalysed reaction is L-rhamnulose + ATP = L-rhamnulose 1-phosphate + ADP + H(+). It functions in the pathway carbohydrate degradation; L-rhamnose degradation; glycerone phosphate from L-rhamnose: step 2/3. In terms of biological role, involved in the catabolism of L-rhamnose (6-deoxy-L-mannose). Catalyzes the transfer of the gamma-phosphate group from ATP to the 1-hydroxyl group of L-rhamnulose to yield L-rhamnulose 1-phosphate. This chain is Rhamnulokinase, found in Klebsiella pneumoniae subsp. pneumoniae (strain ATCC 700721 / MGH 78578).